Reading from the N-terminus, the 43-residue chain is Protein PsbN (43 aa).

A helical transmembrane segment spans residues 5 to 27 (TFLSIFISAALLGITGYSIYTAF).

The protein belongs to the PsbN family.

The protein localises to the plastid. It is found in the cyanelle thylakoid membrane. Its function is as follows. May play a role in photosystem I and II biogenesis. This Cyanophora paradoxa protein is Protein PsbN.